The primary structure comprises 173 residues: Pectinesterase inhibitor 2 (173 aa).

A signal peptide spans 1 to 25 (MAAYLTNRVLMSSLMFFVMTGSLNA). An intrachain disulfide couples Cys34 to Cys43. N-linked (GlcNAc...) asparagine glycosylation is found at Asn39 and Asn63. Cys99 and Cys139 form a disulfide bridge.

It belongs to the PMEI family. Interacts with PPME1. In terms of tissue distribution, highest expression in flowers. Expressed exclusively at the pollen tube tip.

Its subcellular location is the secreted. It localises to the extracellular space. It is found in the apoplast. In terms of biological role, inhibits pectin methylesterase (PME) from flowers, siliques and pollen tube. The chain is Pectinesterase inhibitor 2 from Arabidopsis thaliana (Mouse-ear cress).